The primary structure comprises 148 residues: Large ribosomal subunit protein bL9 (148 aa).

It belongs to the bacterial ribosomal protein bL9 family.

Its function is as follows. Binds to the 23S rRNA. This chain is Large ribosomal subunit protein bL9, found in Listeria monocytogenes serotype 4b (strain CLIP80459).